A 596-amino-acid polypeptide reads, in one-letter code: Succinate dehydrogenase flavoprotein subunit (596 aa).

Residues 18 to 23 (GAGGAG), 41 to 56 (TKLF…AQGG), and D225 each bind FAD. At H49 the chain carries Tele-8alpha-FAD histidine. Residues H246 and T258 each contribute to the substrate site. Residue R290 is the Proton acceptor of the active site. H357 serves as a coordination point for substrate. Position 391 (E391) interacts with FAD. R402 serves as a coordination point for substrate. Residue 407 to 408 (SL) participates in FAD binding.

The protein belongs to the FAD-dependent oxidoreductase 2 family. FRD/SDH subfamily. Part of an enzyme complex containing four subunits: a flavoprotein, an iron-sulfur, cytochrome b-556, and a hydrophobic anchor protein. FAD serves as cofactor.

Its subcellular location is the cell inner membrane. It carries out the reaction a quinone + succinate = fumarate + a quinol. Its pathway is carbohydrate metabolism; tricarboxylic acid cycle; fumarate from succinate (bacterial route): step 1/1. This chain is Succinate dehydrogenase flavoprotein subunit (sdhA), found in Rickettsia conorii (strain ATCC VR-613 / Malish 7).